The sequence spans 72 residues: Aurein-2.5 (72 aa).

Positions 1–22 are cleaved as a signal peptide; that stretch reads MAFLKKSLFLVLFLGLVSLSIC. Positions 23–49 are excised as a propeptide; sequence EKEKRQNEEDEDENEAANHEEGSEEKR. The interval 27–47 is disordered; the sequence is RQNEEDEDENEAANHEEGSEE. Basic and acidic residues predominate over residues 38–47; the sequence is AANHEEGSEE. At leucine 65 the chain carries Leucine amide. A propeptide spanning residues 69–72 is cleaved from the precursor; sequence NDLE.

This sequence belongs to the frog skin active peptide (FSAP) family. Aurein subfamily. As to quaternary structure, may be monomeric or may oligomerize as homodimers or homotrimers in Gram-positive and Gram-negative bacteria mimetic membranes. In terms of processing, C-terminal amidation enhances antibacterial activity. This increase may be due to stabilization of the alpha-helical structure at the membrane interface. As to expression, expressed by the skin dorsal glands.

It localises to the secreted. It is found in the target cell membrane. Amphipathic alpha-helical antimicrobial peptide with moderate to potent activity against Gram-positive bacteria, Gram-negative bacteria and fungi. Also shows a weak activity against biofilm of both Gram-positive and Gram-negative bacteria. Probably acts by disturbing membrane functions with its amphipathic structure. Kills fungi via membranolytic action. Enhanced sterol levels in lipid composition membranes reduce interaction of this peptide with membranes, having a protective effect against the lytic ability of the peptide. Shows anticancer activity. In Ranoidea aurea (Green and golden bell frog), this protein is Aurein-2.5.